The following is a 205-amino-acid chain: High frequency lysogenization protein HflD homolog (205 aa).

This sequence belongs to the HflD family.

The protein localises to the cytoplasm. It localises to the cell inner membrane. The polypeptide is High frequency lysogenization protein HflD homolog (Shewanella piezotolerans (strain WP3 / JCM 13877)).